Consider the following 206-residue polypeptide: Testis-expressed protein 38 (206 aa).

The helical transmembrane segment at 15-35 threads the bilayer; the sequence is VSLYFGILGLCSVITGGCIIF.

It localises to the membrane. This is Testis-expressed protein 38 (TEX38) from Homo sapiens (Human).